Here is a 203-residue protein sequence, read N- to C-terminus: Outer-membrane lipoprotein LolB (203 aa).

The signal sequence occupies residues methionine 1 to alanine 17. Cysteine 18 carries the N-palmitoyl cysteine lipid modification. Residue cysteine 18 is the site of S-diacylglycerol cysteine attachment.

Belongs to the LolB family. In terms of assembly, monomer.

It is found in the cell outer membrane. Functionally, plays a critical role in the incorporation of lipoproteins in the outer membrane after they are released by the LolA protein. The sequence is that of Outer-membrane lipoprotein LolB from Klebsiella pneumoniae subsp. pneumoniae (strain ATCC 700721 / MGH 78578).